The primary structure comprises 203 residues: WUSCHEL-related homeobox 3 (203 aa).

The homeobox; WUS-type DNA-binding region spans 4–68 (TPSTRWCPTP…NHKARERQRL (65 aa)). 3 disordered regions span residues 73-95 (CARH…TAAA), 109-135 (LHHH…QQQQ), and 180-203 (STSG…TSTN). The segment covering 80–91 (PSPPSSTVPPAP) has biased composition (pro residues). Residues 109–118 (LHHHHHHHHP) show a composition bias toward basic residues. Composition is skewed to low complexity over residues 119 to 135 (YAAA…QQQQ) and 190 to 203 (CSSS…TSTN).

It belongs to the WUS homeobox family.

It localises to the nucleus. Transcription factor which may be involved in developmental processes. The sequence is that of WUSCHEL-related homeobox 3 (WOX3) from Oryza sativa subsp. indica (Rice).